A 228-amino-acid chain; its full sequence is Tol-Pal system protein TolQ (228 aa).

3 consecutive transmembrane segments (helical) span residues 16–36 (IVVQ…WAII), 137–157 (VSPY…FMAL), and 172–192 (IAEA…AVMA).

This sequence belongs to the ExbB/TolQ family. As to quaternary structure, the Tol-Pal system is composed of five core proteins: the inner membrane proteins TolA, TolQ and TolR, the periplasmic protein TolB and the outer membrane protein Pal. They form a network linking the inner and outer membranes and the peptidoglycan layer.

The protein resides in the cell inner membrane. Its function is as follows. Part of the Tol-Pal system, which plays a role in outer membrane invagination during cell division and is important for maintaining outer membrane integrity. In Haemophilus influenzae (strain ATCC 51907 / DSM 11121 / KW20 / Rd), this protein is Tol-Pal system protein TolQ.